Here is a 559-residue protein sequence, read N- to C-terminus: Extracellular matrix protein 1 (559 aa).

A signal peptide spans Met-1–Ala-19. A run of 2 repeats spans residues His-170–Tyr-298 and Pro-302–Tyr-424. A 2 X approximate repeats region spans residues His-170–Tyr-424. Asn-373 carries N-linked (GlcNAc...) asparagine glycosylation. Residues Asn-463 and Asn-535 are each glycosylated (N-linked (GlcNAc...) (high mannose) asparagine). The tract at residues Asn-535–Glu-559 is disordered. Ser-556 carries the post-translational modification Phosphoserine.

Interacts (via C-terminus) with HSPG2 (via C-terminus). Interacts with EFEMP1/FBLN3 and LAMB3. Interacts with MMP9. In terms of tissue distribution, expressed in the surrounding connective tissues of developing long bones, but not in the cartilage. The long isoform is expressed in a number of tissues including liver, heart and lungs. The short isoform is expressed in skin and cartilage-containing tissues such as tail and front paw. No expression is found in brain.

It is found in the secreted. Its subcellular location is the extracellular space. The protein localises to the extracellular matrix. Involved in endochondral bone formation as negative regulator of bone mineralization. Stimulates the proliferation of endothelial cells and promotes angiogenesis. Inhibits MMP9 proteolytic activity. The polypeptide is Extracellular matrix protein 1 (Ecm1) (Mus musculus (Mouse)).